Consider the following 219-residue polypeptide: Ribose-5-phosphate isomerase A (219 aa).

Residues 28–31, 81–84, and 94–97 each bind substrate; these read SGST, DGAD, and KGGG. Glu-103 serves as the catalytic Proton acceptor. Lys-121 serves as a coordination point for substrate.

Belongs to the ribose 5-phosphate isomerase family. Homodimer.

The catalysed reaction is aldehydo-D-ribose 5-phosphate = D-ribulose 5-phosphate. Its pathway is carbohydrate degradation; pentose phosphate pathway; D-ribose 5-phosphate from D-ribulose 5-phosphate (non-oxidative stage): step 1/1. In terms of biological role, catalyzes the reversible conversion of ribose-5-phosphate to ribulose 5-phosphate. This chain is Ribose-5-phosphate isomerase A, found in Glaesserella parasuis serovar 5 (strain SH0165) (Haemophilus parasuis).